Reading from the N-terminus, the 1046-residue chain is Protein HBT1 (1046 aa).

Disordered stretches follow at residues 1 to 455, 469 to 894, and 908 to 1046; these read MNMN…AAEK, DYQQ…LGGA, and PSLI…RSEI. Ser41 is modified (phosphoserine). Positions 81–96 are enriched in basic and acidic residues; it reads KDSETPHEDTEADANR. Polar residues-rich tracts occupy residues 98–149, 175–191, and 228–301; these read ANVT…SPPT, IATTHNHSTSKAATSPV, and ANTG…NTDS. Residue Ser303 is modified to Phosphoserine. Residues 327–341 are compositionally biased toward polar residues; that stretch reads VYTSTGPKSNVSSGM. Ser363 bears the Phosphoserine mark. Composition is skewed to polar residues over residues 389 to 408 and 420 to 429; these read QTGLKNDQVSGSDAIQQQTM and GFVSQQPSYH. Residues 430–455 show a composition bias toward basic and acidic residues; that stretch reads DSNKNIQHPEKNKVDNKNISERAAEK. The span at 488–498 shows a compositional bias: polar residues; it reads YSSSAGKNKNL. Ser491 is subject to Phosphoserine. Residues 529 to 538 are compositionally biased toward basic and acidic residues; that stretch reads GHMKYNDNGR. Residues 548 to 559 show a composition bias toward polar residues; sequence QAGSQNTNNNID. Ser561 carries the post-translational modification Phosphoserine. The segment covering 570–582 has biased composition (polar residues); that stretch reads GLSNDATTRNNVV. Basic and acidic residues predominate over residues 586–597; the sequence is MKDEDMNEDSTK. Over residues 605 to 619 the composition is skewed to acidic residues; it reads YLDDVEDYHENDIDD. Over residues 621-630 the composition is skewed to basic and acidic residues; the sequence is SNAKKNDLYS. Residue Ser671 is modified to Phosphoserine. The segment covering 742 to 756 has biased composition (polar residues); sequence FTNNPETGTTGNVDT. Basic and acidic residues predominate over residues 773–782; it reads DDSKNTDTHL. Polar residues-rich tracts occupy residues 792-802 and 837-855; these read NSRSGDTTYSK and SSEQKASYGSGGNSQNQEY. A Phosphotyrosine modification is found at Tyr855. At Ser857 the chain carries Phosphoserine. Basic and acidic residues predominate over residues 868-890; it reads KVLEEDAPGYKREVDLKNKRRTD. Polar residues predominate over residues 922-951; it reads DTNTSSSQKPSEGTYPETTSYSIHNETTSQ. Residues 952–963 are compositionally biased toward low complexity; that stretch reads GRKVSVGSMGSG. Positions 964 to 976 are enriched in basic residues; it reads KSKHHHNHHRHSR. Ser1005 is subject to Phosphoserine. Positions 1006–1019 are enriched in acidic residues; that stretch reads DEGEQDYHDDEQGE. At Ser1034 the chain carries Phosphoserine.

In terms of assembly, conjugated with HUB1. HUB1 has not the classical C-terminal Gly residue, so it is still unknown how conjugation may occur.

It localises to the cytoplasm. Functionally, polarity-determining protein which forms a conjugate with the ubiquitin-like modifier HUB1. Involved in bud site selection and cellular morphogenesis during conjugation. Required for survival during stationary phase. The polypeptide is Protein HBT1 (HBT1) (Saccharomyces cerevisiae (strain ATCC 204508 / S288c) (Baker's yeast)).